The sequence spans 278 residues: HTH-type transcriptional regulator HdfR (278 aa).

An HTH lysR-type domain is found at 1–58 (MDTELLKTFLEVSRTRHFGRAAEALYLTQSAVSFRIRQLENQLGVNLFTRHRNNIRLT). The H-T-H motif DNA-binding region spans 18-37 (FGRAAEALYLTQSAVSFRIR).

This sequence belongs to the LysR transcriptional regulatory family.

In terms of biological role, negatively regulates the transcription of the flagellar master operon flhDC by binding to the upstream region of the operon. The polypeptide is HTH-type transcriptional regulator HdfR (Salmonella dublin (strain CT_02021853)).